Consider the following 636-residue polypeptide: Chaperone protein DnaK (636 aa).

At T203 the chain carries Phosphothreonine; by autocatalysis. The segment at 602–636 (VYGKQQEGAPAQEEPSAEGKKADDEGTVEGEFREV) is disordered. A compositionally biased stretch (basic and acidic residues) spans 618–636 (AEGKKADDEGTVEGEFREV).

The protein belongs to the heat shock protein 70 family.

Its function is as follows. Acts as a chaperone. The chain is Chaperone protein DnaK from Dehalococcoides mccartyi (strain CBDB1).